The primary structure comprises 140 residues: Odorant-binding protein 10 (140 aa).

A signal peptide spans 1-25 (MTSFRLANLTVFLVLLFCFMRGVHS).

The protein belongs to the PBP/GOBP family. High-level expression in female mouth parts, particularly in the proboscis (at protein level). Low-level expression in female antenna (at protein level). Female salivary gland. Female chemosensory organs: antenna, palp and proboscis. Male antenna, wing and maxillary palp. Expressed at higher levels in male tissues compared to female tissues. Not detected in midgut.

It is found in the secreted. Involved in modulation of blood-feeding behavior and capacity in female mosquitoes. Required for normal oviposition. Required for normal fecundity and fertility of female mosquitoes. Required for normal expression of VGA1 gene, which encodes the egg yolk protein vitellogenin-A1. Required for normal female longevity when mosquitoes are maintained on regular sugar meal. Functionally, (Microbial infection) Facilitates shedding of dengue virus type 2 particles into mosquito saliva. Does not affect dengue virus type 2 replication or infection prevalence in midgut and salivary glands at 14 days after blood feeding. In terms of biological role, (Microbial infection) Facilitates shedding of Zika virus particles into mosquito saliva. Does not affect Zika virus replication or infection prevalence in midgut and salivary glands at 14 days after blood feeding. The protein is Odorant-binding protein 10 of Aedes aegypti (Yellowfever mosquito).